Consider the following 358-residue polypeptide: Putative ZDHHC-type palmitoyltransferase 4 (358 aa).

The next 4 helical transmembrane spans lie at Phe28–Phe48, Leu57–Ile77, Tyr171–Leu191, and Leu210–Gly230. Residues Ser127–Ser177 enclose the DHHC domain. Residues Asn255 and Asn296 are each glycosylated (N-linked (GlcNAc...) asparagine). The tract at residues Asn302 to Lys358 is disordered. Low complexity predominate over residues Asn305–Asn332.

It belongs to the DHHC palmitoyltransferase family.

It is found in the membrane. The enzyme catalyses L-cysteinyl-[protein] + hexadecanoyl-CoA = S-hexadecanoyl-L-cysteinyl-[protein] + CoA. The chain is Putative ZDHHC-type palmitoyltransferase 4 from Dictyostelium discoideum (Social amoeba).